A 504-amino-acid polypeptide reads, in one-letter code: Anaerobic nitric oxide reductase transcription regulator NorR (504 aa).

Asp-57 is modified (4-aspartylphosphate). The Sigma-54 factor interaction domain maps to 187–416 (MIGLSPGMTQ…LEHAIHRAVV (230 aa)). ATP contacts are provided by residues 215-222 (GETGTGKE) and 278-287 (ADNGTLFLDE). The segment at residues 479-498 (WAACARMLETDVANLHRLAK) is a DNA-binding region (H-T-H motif).

It participates in nitrogen metabolism; nitric oxide reduction. In terms of biological role, required for the expression of anaerobic nitric oxide (NO) reductase, acts as a transcriptional activator for at least the norVW operon. Activation also requires sigma-54. This chain is Anaerobic nitric oxide reductase transcription regulator NorR, found in Shigella dysenteriae serotype 1 (strain Sd197).